A 453-amino-acid polypeptide reads, in one-letter code: Bifunctional protein GlmU (453 aa).

The segment at 1–226 (MKFSAVILAA…PIEVEGVNDR (226 aa)) is pyrophosphorylase. UDP-N-acetyl-alpha-D-glucosamine is bound by residues 8 to 11 (LAAG), Lys22, Gln73, 78 to 79 (GT), 100 to 102 (YGD), Gly137, Glu151, Asn166, and Asn224. Mg(2+) is bound at residue Asp102. Position 224 (Asn224) interacts with Mg(2+). Residues 227-247 (AQLARLERAFQAAQAKKLLEQ) are linker. An N-acetyltransferase region spans residues 248–453 (GVMLRDPARF…TGWQRPVKKK (206 aa)). The UDP-N-acetyl-alpha-D-glucosamine site is built by Arg330 and Lys348. His360 serves as the catalytic Proton acceptor. Positions 363 and 374 each coordinate UDP-N-acetyl-alpha-D-glucosamine. Acetyl-CoA is bound by residues Ala377, 383–384 (NY), Ser402, Ala420, and Arg437.

The protein in the N-terminal section; belongs to the N-acetylglucosamine-1-phosphate uridyltransferase family. This sequence in the C-terminal section; belongs to the transferase hexapeptide repeat family. In terms of assembly, homotrimer. Mg(2+) is required as a cofactor.

It localises to the cytoplasm. The enzyme catalyses alpha-D-glucosamine 1-phosphate + acetyl-CoA = N-acetyl-alpha-D-glucosamine 1-phosphate + CoA + H(+). The catalysed reaction is N-acetyl-alpha-D-glucosamine 1-phosphate + UTP + H(+) = UDP-N-acetyl-alpha-D-glucosamine + diphosphate. Its pathway is nucleotide-sugar biosynthesis; UDP-N-acetyl-alpha-D-glucosamine biosynthesis; N-acetyl-alpha-D-glucosamine 1-phosphate from alpha-D-glucosamine 6-phosphate (route II): step 2/2. It participates in nucleotide-sugar biosynthesis; UDP-N-acetyl-alpha-D-glucosamine biosynthesis; UDP-N-acetyl-alpha-D-glucosamine from N-acetyl-alpha-D-glucosamine 1-phosphate: step 1/1. The protein operates within bacterial outer membrane biogenesis; LPS lipid A biosynthesis. Its function is as follows. Catalyzes the last two sequential reactions in the de novo biosynthetic pathway for UDP-N-acetylglucosamine (UDP-GlcNAc). The C-terminal domain catalyzes the transfer of acetyl group from acetyl coenzyme A to glucosamine-1-phosphate (GlcN-1-P) to produce N-acetylglucosamine-1-phosphate (GlcNAc-1-P), which is converted into UDP-GlcNAc by the transfer of uridine 5-monophosphate (from uridine 5-triphosphate), a reaction catalyzed by the N-terminal domain. In Vibrio vulnificus (strain CMCP6), this protein is Bifunctional protein GlmU.